Consider the following 325-residue polypeptide: HTH-type transcriptional regulator BbuR (325 aa).

The region spanning 15–72 (LDTDLLNVFCWVAKTQSFSRAAAELGTSQPVITRKIGRLEECLGVALFVRSNRGCVLT) is the HTH lysR-type domain. Residues 32–51 (FSRAAAELGTSQPVITRKIG) constitute a DNA-binding region (H-T-H motif).

This sequence belongs to the LysR transcriptional regulatory family.

The sequence is that of HTH-type transcriptional regulator BbuR (bbuR) from Bordetella bronchiseptica (strain ATCC BAA-588 / NCTC 13252 / RB50) (Alcaligenes bronchisepticus).